We begin with the raw amino-acid sequence, 427 residues long: Histidinol dehydrogenase (427 aa).

NAD(+) is bound by residues Y125, Q186, and N209. Substrate is bound by residues S234, Q256, and H259. Zn(2+) contacts are provided by Q256 and H259. Residues E325 and H326 each act as proton acceptor in the active site. Residues H326, D359, E413, and H419 each contribute to the substrate site. Residue D359 coordinates Zn(2+). H419 provides a ligand contact to Zn(2+).

The protein belongs to the histidinol dehydrogenase family. The cofactor is Zn(2+).

The catalysed reaction is L-histidinol + 2 NAD(+) + H2O = L-histidine + 2 NADH + 3 H(+). Its pathway is amino-acid biosynthesis; L-histidine biosynthesis; L-histidine from 5-phospho-alpha-D-ribose 1-diphosphate: step 9/9. Its function is as follows. Catalyzes the sequential NAD-dependent oxidations of L-histidinol to L-histidinaldehyde and then to L-histidine. This Leptospira interrogans serogroup Icterohaemorrhagiae serovar copenhageni (strain Fiocruz L1-130) protein is Histidinol dehydrogenase.